We begin with the raw amino-acid sequence, 210 residues long: 2-hydroxy-3-keto-5-methylthiopentenyl-1-phosphate phosphatase (210 aa).

It belongs to the HAD-like hydrolase superfamily. MtnX family.

The enzyme catalyses 2-hydroxy-5-methylsulfanyl-3-oxopent-1-enyl phosphate + H2O = 1,2-dihydroxy-5-(methylsulfanyl)pent-1-en-3-one + phosphate. It functions in the pathway amino-acid biosynthesis; L-methionine biosynthesis via salvage pathway; L-methionine from S-methyl-5-thio-alpha-D-ribose 1-phosphate: step 4/6. Its function is as follows. Dephosphorylates 2-hydroxy-3-keto-5-methylthiopentenyl-1-phosphate (HK-MTPenyl-1-P) yielding 1,2-dihydroxy-3-keto-5-methylthiopentene (DHK-MTPene). The chain is 2-hydroxy-3-keto-5-methylthiopentenyl-1-phosphate phosphatase from Microcystis aeruginosa.